A 155-amino-acid polypeptide reads, in one-letter code: Endoribonuclease YbeY (155 aa).

His114, His118, and His124 together coordinate Zn(2+).

This sequence belongs to the endoribonuclease YbeY family. The cofactor is Zn(2+).

The protein localises to the cytoplasm. Single strand-specific metallo-endoribonuclease involved in late-stage 70S ribosome quality control and in maturation of the 3' terminus of the 16S rRNA. The polypeptide is Endoribonuclease YbeY (Shigella flexneri serotype 5b (strain 8401)).